Consider the following 134-residue polypeptide: Fluoride-specific ion channel FluC 3 (134 aa).

The next 4 helical transmembrane spans lie at L4–L24, M35–F55, M67–V87, and I100–I120. Residues G74 and S77 each coordinate Na(+).

It belongs to the fluoride channel Fluc/FEX (TC 1.A.43) family.

The protein localises to the cell inner membrane. The catalysed reaction is fluoride(in) = fluoride(out). Its activity is regulated as follows. Na(+) is not transported, but it plays an essential structural role and its presence is essential for fluoride channel function. Functionally, fluoride-specific ion channel. Important for reducing fluoride concentration in the cell, thus reducing its toxicity. The polypeptide is Fluoride-specific ion channel FluC 3 (Yersinia pseudotuberculosis serotype I (strain IP32953)).